Here is a 116-residue protein sequence, read N- to C-terminus: Large ribosomal subunit protein bL17 (116 aa).

It belongs to the bacterial ribosomal protein bL17 family. Part of the 50S ribosomal subunit. Contacts protein L32.

The sequence is that of Large ribosomal subunit protein bL17 from Prochlorococcus marinus (strain MIT 9211).